We begin with the raw amino-acid sequence, 481 residues long: tRNA:m(4)X modification enzyme TRM13 homolog (481 aa).

Residues 56-83 form a CHHC U11-48K-type zinc finger; that stretch reads RILCPLDPKHTVYEDQLAKHLKKCNSRE. Zn(2+)-binding residues include Cys59, His65, His75, and Cys79. Residues 113–140 are a coiled coil; the sequence is SLSEEQLENLIKKLRKASEGLNSTHEDH. 2 disordered regions span residues 296 to 319 and 379 to 414; these read AKRIKNDKTEKESNTLAKEGSEKD and LEGSDVTPERKDAQRDENEEHDDGGDRLTDGNTDSL. Basic and acidic residues predominate over residues 385 to 407; the sequence is TPERKDAQRDENEEHDDGGDRLT.

This sequence belongs to the methyltransferase TRM13 family.

It carries out the reaction cytidine(4) in tRNA(Pro) + S-adenosyl-L-methionine = 2'-O-methylcytidine(4) in tRNA(Pro) + S-adenosyl-L-homocysteine + H(+). The catalysed reaction is cytidine(4) in tRNA(Gly)(GCC) + S-adenosyl-L-methionine = 2'-O-methylcytidine(4) in tRNA(Gly)(GCC) + S-adenosyl-L-homocysteine + H(+). It catalyses the reaction adenosine(4) in tRNA(His) + S-adenosyl-L-methionine = 2'-O-methyladenosine(4) in tRNA(His) + S-adenosyl-L-homocysteine + H(+). In terms of biological role, tRNA methylase which 2'-O-methylates cytidine(4) in tRNA(Pro) and tRNA(Gly)(GCC), and adenosine(4) in tRNA(His). The sequence is that of tRNA:m(4)X modification enzyme TRM13 homolog (Trmt13) from Mus musculus (Mouse).